A 674-amino-acid chain; its full sequence is Tripartite terminase subunit 3 (674 aa).

The Walker A motif motif lies at 212–219 (VPRRHGKT). The short motif at 305-310 (LLLVDE) is the Walker B motif element. The active-site For ATPase activity is Glu-310. Residues Asp-463, Glu-534, and Asp-651 each act as for nuclease activity in the active site.

The protein belongs to the herpesviridae TRM3 protein family. In terms of assembly, interacts with the terminase subunits TRM1 and TRM2. Interacts with portal protein.

The protein resides in the host nucleus. In terms of biological role, component of the molecular motor that translocates viral genomic DNA in empty capsid during DNA packaging. Forms a tripartite terminase complex together with TRM1 and TRM2 in the host cytoplasm. Once the complex reaches the host nucleus, it interacts with the capsid portal vertex. This portal forms a ring in which genomic DNA is translocated into the capsid. TRM3 carries an RNase H-like nuclease activity that plays an important role for the cleavage of concatemeric viral DNA into unit length genomes. In Homo sapiens (Human), this protein is Tripartite terminase subunit 3.